A 115-amino-acid chain; its full sequence is uncharacterized protein (115 aa).

A run of 3 helical transmembrane segments spans residues 6–26 (ILIILVIILTTYFTRIWPFMV), 43–63 (ALSCSVIGMLVIYCFKDIHIL), and 84–104 (IFKVFVLSITLPTILYMVLVQ).

It belongs to the AzlD/HI_1737/HP1330 family.

The protein localises to the cell membrane. This is an uncharacterized protein from Helicobacter pylori (strain ATCC 700392 / 26695) (Campylobacter pylori).